The sequence spans 418 residues: Sialidase-3 (418 aa).

The FRIP motif motif lies at 24 to 27 (YRIP). Positions 25 and 45 each coordinate substrate. Asp50 (proton acceptor) is an active-site residue. Residues 129–140 (LYSEDSGCSWGE) form a BNR 1 repeat. Substrate-binding residues include Tyr179 and Tyr181. The BNR 2 repeat unit spans residues 201-212 (FYSDDLGVTWHC). Positions 223 and 243 each coordinate substrate. One copy of the BNR 3 repeat lies at 252 to 263 (AFSTDSGDCFQK). Arg339 contributes to the substrate binding site. The Nucleophile role is filled by Tyr369. Residue Glu386 is part of the active site.

The protein belongs to the glycosyl hydrolase 33 family. As to quaternary structure, interacts with CAV1; this interaction enhances NEU3 sialidase activity within caveola. Interacts with EGFR; this interaction mediates desialylation of EGFR enhancing downstream signaling. Post-translationally, palmitoylated; may regulate intracellular trafficking and anchorage to plasma membrane and endomembranes. Expressed in brain, cardiac muscle and weakly in liver.

Its subcellular location is the cell membrane. The protein resides in the membrane. It localises to the caveola. The protein localises to the early endosome membrane. It is found in the recycling endosome membrane. Its subcellular location is the lysosome membrane. The enzyme catalyses Hydrolysis of alpha-(2-&gt;3)-, alpha-(2-&gt;6)-, alpha-(2-&gt;8)- glycosidic linkages of terminal sialic acid residues in oligosaccharides, glycoproteins, glycolipids, colominic acid and synthetic substrates.. It catalyses the reaction a ganglioside GD1a + H2O = a ganglioside GM1 + N-acetylneuraminate. It carries out the reaction a ganglioside GD1a (d18:1(4E)) + H2O = a ganglioside GM1 (d18:1(4E)) + N-acetylneuraminate. The catalysed reaction is a ganglioside GD1b + H2O = a ganglioside GM1 + N-acetylneuraminate. The enzyme catalyses a ganglioside GD1b (d18:1(4E)) + H2O = a ganglioside GM1 (d18:1(4E)) + N-acetylneuraminate. It catalyses the reaction a ganglioside GD3 + H2O = a ganglioside GM3 + N-acetylneuraminate. It carries out the reaction a ganglioside GD3 (d18:1(4E)) + H2O = a ganglioside GM3 (d18:1(4E)) + N-acetylneuraminate. The catalysed reaction is a ganglioside GM3 + H2O = a beta-D-galactosyl-(1-&gt;4)-beta-D-glucosyl-(1&lt;-&gt;1)-ceramide + N-acetylneuraminate. The enzyme catalyses a ganglioside GM1 + H2O = a ganglioside GA1 + N-acetylneuraminate. It catalyses the reaction a ganglioside GM1 (d18:1(4E)) + H2O = a ganglioside GA1 (d18:1(4E)) + N-acetylneuraminate. It carries out the reaction a ganglioside GM2 (d18:1(4E)) + H2O = a ganglioside GA2 (d18:1(4E)) + N-acetylneuraminate. The catalysed reaction is a ganglioside GM3 (d18:1(4E)) + H2O = a beta-D-Gal-(1-&gt;4)-beta-D-Glc-(1&lt;-&gt;1)-Cer(d18:1(4E)) + N-acetylneuraminate. The enzyme catalyses a ganglioside GT1b + H2O = a ganglioside GD1b + N-acetylneuraminate. Its function is as follows. Exo-alpha-sialidase that catalyzes the hydrolytic cleavage of the terminal sialic acid (N-acetylneuraminic acid, Neu5Ac) of a glycan moiety in the catabolism of glycolipids, glycoproteins and oligosacharides. Displays high catalytic efficiency for gangliosides including alpha-(2-&gt;3)-sialylated GD1a and GM3 and alpha-(2-&gt;8)-sialylated GD3. Plays a role in the regulation of transmembrane signaling through the modulation of ganglioside content of the lipid bilayer and by direct interaction with signaling receptors, such as EGFR. Desialylates EGFR and activates downstream signaling in proliferating cells. Contributes to clathrin-mediated endocytosis by regulating sorting of endocytosed receptors to early and recycling endosomes. The polypeptide is Sialidase-3 (Neu3) (Rattus norvegicus (Rat)).